Consider the following 494-residue polypeptide: Acetyl-coenzyme A carboxylase carboxyl transferase subunit beta, chloroplastic (494 aa).

The region spanning 230-494 (LWVQCENCYG…LHGFFPLNQN (265 aa)) is the CoA carboxyltransferase N-terminal domain. Cys-234, Cys-237, Cys-253, and Cys-256 together coordinate Zn(2+). The C4-type zinc finger occupies 234–256 (CENCYGLNYKKFFRSKMNICEQC).

It belongs to the AccD/PCCB family. Acetyl-CoA carboxylase is a heterohexamer composed of biotin carboxyl carrier protein, biotin carboxylase and 2 subunits each of ACCase subunit alpha and ACCase plastid-coded subunit beta (accD). Zn(2+) serves as cofactor.

Its subcellular location is the plastid. The protein resides in the chloroplast stroma. The enzyme catalyses N(6)-carboxybiotinyl-L-lysyl-[protein] + acetyl-CoA = N(6)-biotinyl-L-lysyl-[protein] + malonyl-CoA. It functions in the pathway lipid metabolism; malonyl-CoA biosynthesis; malonyl-CoA from acetyl-CoA: step 1/1. Functionally, component of the acetyl coenzyme A carboxylase (ACC) complex. Biotin carboxylase (BC) catalyzes the carboxylation of biotin on its carrier protein (BCCP) and then the CO(2) group is transferred by the transcarboxylase to acetyl-CoA to form malonyl-CoA. This is Acetyl-coenzyme A carboxylase carboxyl transferase subunit beta, chloroplastic from Drimys granadensis.